The sequence spans 473 residues: Sun domain-containing protein 1 (473 aa).

The tract at residues 1-47 (MALRHTISPQFSNRHSPPVTRSVSRTGVHQPLDTSTPVTRRDSQPGT) is disordered. Over residues 7 to 47 (ISPQFSNRHSPPVTRSVSRTGVHQPLDTSTPVTRRDSQPGT) the composition is skewed to polar residues. 2 coiled-coil regions span residues 163–191 (ISNLRAEFSAHDKQLDFKTDHLEKLLENV) and 204–235 (EELKQIKLWQAEISDALQQMKKEIDDAKSTKI). Residues 237–257 (HSTPEKAPETAPTASLPPSSQ) form a disordered region. The segment covering 248 to 257 (PTASLPPSSQ) has biased composition (polar residues). A helical transmembrane segment spans residues 262 to 282 (HITRRALLGVNVANSLIGASI). The 165-residue stretch at 279–443 (GASIDHSCSS…YLIRVYGEPV (165 aa)) folds into the SUN domain. A disordered region spans residues 443–473 (VDPPKETQPMTDNGTESKLESAIVNSVSETA).

The protein localises to the nucleus membrane. Its subcellular location is the nucleus envelope. Involved in centrosome attachment to the nucleus. Required for zyg-12 localization to the nuclear envelope. Together with pot-1, it is required to anchor telomeres to the nuclear envelope in embryos. The polypeptide is Sun domain-containing protein 1 (Caenorhabditis elegans).